A 368-amino-acid chain; its full sequence is Tubby-like F-box protein 2 (368 aa).

Positions 1–17 are enriched in low complexity; that stretch reads MVPWRRSSSSSSAPSSR. Residues 1 to 44 form a disordered region; it reads MVPWRRSSSSSSAPSSRPARRPARTNARVSPDVSSELSPLAGEE. In terms of domain architecture, F-box spans 49 to 104; the sequence is ERWSALVPDLLADILRCVEAGSERWPPRRDVVACASVCRRWRDVAVAVVQPPLESG.

It belongs to the TUB family. Expressed in stems, leaves, flowers and seeds.

This chain is Tubby-like F-box protein 2 (TULP2), found in Oryza sativa subsp. japonica (Rice).